The following is a 187-amino-acid chain: MADEQNLDAQAQDQAAEAGAGEELTTRVQVLEEQLAAAQDQSLRVAADLQNVRRRAEQDVEKAHKFALEKFAGDLLPIIDSLERGLDLSNPDDESIRPMREGIELTLKMFQDTLKRYQLEAIDPYGQPFSADQHQAMAMQESADVEPNTVLKVFQKGYQLNGRLLRPAMVVVSKAPSPATPSINEQA.

Positions 1–23 (MADEQNLDAQAQDQAAEAGAGEE) are disordered. The span at 7 to 23 (LDAQAQDQAAEAGAGEE) shows a compositional bias: low complexity.

This sequence belongs to the GrpE family. As to quaternary structure, homodimer.

It localises to the cytoplasm. Its function is as follows. Participates actively in the response to hyperosmotic and heat shock by preventing the aggregation of stress-denatured proteins, in association with DnaK and GrpE. It is the nucleotide exchange factor for DnaK and may function as a thermosensor. Unfolded proteins bind initially to DnaJ; upon interaction with the DnaJ-bound protein, DnaK hydrolyzes its bound ATP, resulting in the formation of a stable complex. GrpE releases ADP from DnaK; ATP binding to DnaK triggers the release of the substrate protein, thus completing the reaction cycle. Several rounds of ATP-dependent interactions between DnaJ, DnaK and GrpE are required for fully efficient folding. In Pseudomonas savastanoi pv. phaseolicola (strain 1448A / Race 6) (Pseudomonas syringae pv. phaseolicola (strain 1448A / Race 6)), this protein is Protein GrpE.